Consider the following 277-residue polypeptide: ATP-dependent Clp protease proteolytic subunit, mitochondrial (277 aa).

The N-terminal 56 residues, Met-1 to Leu-56, are a transit peptide targeting the mitochondrion. The active-site Nucleophile is the Ser-153. His-178 is a catalytic residue. Lys-200 carries the post-translational modification N6-succinyllysine. Residue Lys-211 is modified to N6-acetyllysine. The disordered stretch occupies residues Val-246–Thr-277. The span at Glu-265 to Thr-277 shows a compositional bias: low complexity.

Belongs to the peptidase S14 family. As to quaternary structure, fourteen CLPP subunits assemble into 2 heptameric rings which stack back to back to give a disk-like structure with a central cavity. Component of the ClpXP complex formed by the assembly of two CLPP heptameric rings with two CLPX hexameric rings, giving rise to a symmetrical structure with two central CLPP rings flanked by a CLPX ring at either end of the complex. Detected in liver (at protein level). Predominantly expressed in skeletal muscle. Intermediate levels in heart, liver and pancreas. Low in brain, placenta, lung and kidney.

Its subcellular location is the mitochondrion matrix. It carries out the reaction Hydrolysis of proteins to small peptides in the presence of ATP and magnesium. alpha-casein is the usual test substrate. In the absence of ATP, only oligopeptides shorter than five residues are hydrolyzed (such as succinyl-Leu-Tyr-|-NHMec, and Leu-Tyr-Leu-|-Tyr-Trp, in which cleavage of the -Tyr-|-Leu- and -Tyr-|-Trp bonds also occurs).. Protease component of the ClpXP complex that cleaves peptides and various proteins in an ATP-dependent process. Has low peptidase activity in the absence of CLPX. The ClpXP complex can degrade CSN1S1, CSN2 and CSN3, as well as synthetic peptides (in vitro) and may be responsible for a fairly general and central housekeeping function rather than for the degradation of specific substrates. Cleaves PINK1 in the mitochondrion. This Homo sapiens (Human) protein is ATP-dependent Clp protease proteolytic subunit, mitochondrial.